Here is a 193-residue protein sequence, read N- to C-terminus: uncharacterized protein (193 aa).

3 disordered regions span residues 1–21 (MPKGRRGSQSPTMSQRPAPPL), 53–96 (GAPA…PWPS), and 114–136 (SGPEAAASPLAPGPMTSRLASAS). Positions 53–70 (GAPAGGAPAAGGRSLPQG) are enriched in low complexity. A compositionally biased stretch (pro residues) spans 71–95 (PSAPAPPPPPGLGPPSERPCPPPWP). Low complexity predominate over residues 116–127 (PEAAASPLAPGP).

This is an uncharacterized protein from Bos taurus (Bovine).